The primary structure comprises 384 residues: DNA dC-&gt;dU-editing enzyme APOBEC-3G (384 aa).

The interval 1 to 60 is essential for cytoplasmic localization; the sequence is MKPHFRNTVERMYRDTFSYNFYNRPILSRRNTVWLCYEVKTKGPSRPPLDAKIFRGQVYS. The 110-residue stretch at 29–138 folds into the CMP/dCMP-type deaminase 1 domain; that stretch reads RRNTVWLCYE…PDYQEALRSL (110 aa). Phosphothreonine; by PKA is present on Thr32. Residues Lys42, Lys52, and Lys63 each participate in a (Microbial infection) Glycyl lysine isopeptide (Lys-Gly) (interchain with G-Cter in ubiquitin) cross-link. His65, Cys97, and Cys100 together coordinate Zn(2+). (Microbial infection) Glycyl lysine isopeptide (Lys-Gly) (interchain with G-Cter in ubiquitin) cross-links involve residues Lys150 and Lys163. The segment at 209-336 is necessary for homooligomerization; that stretch reads EPWVRGRHET…TLAEAGAKIS (128 aa). Residues 213-215 are interaction with DNA; that stretch reads RGR. The CMP/dCMP-type deaminase 2 domain maps to 214–328; sequence GRHETYLCYE…GRCQEGLRTL (115 aa). The residue at position 218 (Thr218) is a Phosphothreonine; by PKA and CAMK2. Residue Lys249 forms a (Microbial infection) Glycyl lysine isopeptide (Lys-Gly) (interchain with G-Cter in ubiquitin) linkage. His257 lines the Zn(2+) pocket. Glu259 functions as the Proton donor in the catalytic mechanism. Lys270 participates in a covalent cross-link: (Microbial infection) Glycyl lysine isopeptide (Lys-Gly) (interchain with G-Cter in ubiquitin). Cys288 and Cys291 together coordinate Zn(2+). Residues Lys297, Lys301, and Lys303 each participate in a (Microbial infection) Glycyl lysine isopeptide (Lys-Gly) (interchain with G-Cter in ubiquitin) cross-link. Residues 313-320 are interaction with DNA; it reads RIYDDQGR. Lys334 participates in a covalent cross-link: (Microbial infection) Glycyl lysine isopeptide (Lys-Gly) (interchain with G-Cter in ubiquitin).

The protein belongs to the cytidine and deoxycytidylate deaminase family. As to quaternary structure, homodimer. Homooligomer. Can bind RNA to form ribonucleoprotein complexes of high-molecular-mass (HMM) or low-molecular-mass (LMM). HMM is inactive and heterogeneous in protein composition because of binding nonselectively to cellular RNAs, which in turn are associated with variety of cellular proteins. The LMM form which is enzymatically active has few or no RNAs associated. Its ability to form homooligomer is distinct from its ability to assemble into HMM. Interacts with APOBEC3B, APOBEC3F, MOV10, AGO2, EIF4E, EIF4ENIF1, DCP2 and DDX6 in an RNA-dependent manner. Interacts with AGO1, AGO3 and PKA/PRKACA. In terms of assembly, (Microbial infection) Interacts with HIV-1 Vif; promoting its ubiquitination by a cullin-5-RING E3 ubiquitin-protein ligase complex (ECS complex) hijacked by the HIV-1 Vif. (Microbial infection) Interacts with HIV-1 reverse transcriptase/ribonuclease H. As to quaternary structure, (Microbial infection) Interacts with hepatitis B virus capsid protein. The cofactor is Zn(2+). In terms of processing, (Microbial infection) Following infection by HIV-1, ubiquitinated by a cullin-5-RING E3 ubiquitin-protein ligase complex (ECS complex) hijacked by the HIV-1 Vif protein, leading to its degradation. Deubiquitinated by USP49; leading to stabilization. Post-translationally, phosphorylation at Thr-32 reduces its binding to HIV-1 Vif and subsequent ubiquitination and degradation thus promoting its antiviral activity. As to expression, expressed in spleen, testes, ovary and peripheral blood leukocytes and CD4+ lymphocytes. Also expressed in non-permissive peripheral blood mononuclear cells, and several tumor cell lines; no expression detected in permissive lymphoid and non-lymphoid cell lines. Exists only in the LMM form in peripheral blood-derived resting CD4 T-cells and monocytes, both of which are refractory to HIV-1 infection. LMM is converted to a HMM complex when resting CD4 T-cells are activated or when monocytes are induced to differentiate into macrophages. This change correlates with increased susceptibility of these cells to HIV-1 infection.

The protein resides in the cytoplasm. It is found in the nucleus. It localises to the P-body. The enzyme catalyses a 2'-deoxycytidine in single-stranded DNA + H2O + H(+) = a 2'-deoxyuridine in single-stranded DNA + NH4(+). Its activity is regulated as follows. (Microbial infection) Antiviral activity is neutralized by the HIV-1 virion infectivity factor (Vif), that prevents its incorporation into progeny virions by both inhibiting its translation and/or by inducing its ubiquitination and subsequent degradation by the 26S proteasome. Can also be neutralized by simian immunodeficiency virus sooty mangabey monkey virus (SIV-sm) and chimpanzee immunodeficiency virus (SIV-cpz) Vif. In terms of biological role, DNA deaminase (cytidine deaminase) which acts as an inhibitor of retrovirus replication and retrotransposon mobility via deaminase-dependent and -independent mechanisms. Exhibits potent antiviral activity against Vif-deficient HIV-1. After the penetration of retroviral nucleocapsids into target cells of infection and the initiation of reverse transcription, it can induce the conversion of cytosine to uracil in the minus-sense single-strand viral DNA, leading to G-to-A hypermutations in the subsequent plus-strand viral DNA. The resultant detrimental levels of mutations in the proviral genome, along with a deamination-independent mechanism that works prior to the proviral integration, together exert efficient antiretroviral effects in infected target cells. Selectively targets single-stranded DNA and does not deaminate double-stranded DNA or single- or double-stranded RNA. Exhibits antiviral activity also against simian immunodeficiency viruses (SIVs), hepatitis B virus (HBV), equine infectious anemia virus (EIAV), xenotropic MuLV-related virus (XMRV) and simian foamy virus (SFV). May inhibit the mobility of LTR and non-LTR retrotransposons. The protein is DNA dC-&gt;dU-editing enzyme APOBEC-3G of Homo sapiens (Human).